Consider the following 463-residue polypeptide: Maintenance of mitochondrial morphology protein 1-2 (463 aa).

At methionine 1–glycine 23 the chain is on the lumenal side. A helical transmembrane segment spans residues leucine 24–phenylalanine 44. The Cytoplasmic segment spans residues alanine 45–serine 463. Residues glycine 72–valine 152 are disordered. The segment covering arginine 108 to glycine 122 has biased composition (polar residues). Residues alanine 205–proline 435 enclose the SMP-LTD domain.

The protein belongs to the MMM1 family. As to quaternary structure, homodimer. Component of the ER-mitochondria encounter structure (ERMES) or MDM complex, composed of MMM1, MDM10, MDM12 and MDM34. An MMM1 homodimer associates with one molecule of MDM12 on each side in a pairwise head-to-tail manner, and the SMP-LTD domains of MMM1 and MDM12 generate a continuous hydrophobic tunnel for phospholipid trafficking.

The protein resides in the endoplasmic reticulum membrane. In terms of biological role, component of the ERMES/MDM complex, which serves as a molecular tether to connect the endoplasmic reticulum (ER) and mitochondria. Components of this complex are involved in the control of mitochondrial shape and protein biogenesis, and function in nonvesicular lipid trafficking between the ER and mitochondria. The MDM12-MMM1 subcomplex functions in the major beta-barrel assembly pathway that is responsible for biogenesis of all outer membrane beta-barrel proteins, and acts in a late step after the SAM complex. The MDM10-MDM12-MMM1 subcomplex further acts in the TOM40-specific pathway after the action of the MDM12-MMM1 complex. Essential for establishing and maintaining the structure of mitochondria and maintenance of mtDNA nucleoids. The protein is Maintenance of mitochondrial morphology protein 1-2 of Yarrowia lipolytica (strain CLIB 122 / E 150) (Yeast).